The chain runs to 403 residues: S-adenosylmethionine synthase (403 aa).

H17 is a binding site for ATP. Residue D19 participates in Mg(2+) binding. E45 is a K(+) binding site. Positions 58 and 104 each coordinate L-methionine. The interval 104-114 is flexible loop; that stretch reads QSPDIAQGVDT. ATP-binding positions include 179 to 181, 250 to 251, D259, 265 to 266, A282, and K286; these read DGK, KF, and RK. D259 contacts L-methionine. K290 is a binding site for L-methionine.

The protein belongs to the AdoMet synthase family. Homotetramer; dimer of dimers. Mg(2+) is required as a cofactor. K(+) serves as cofactor.

The protein resides in the cytoplasm. The catalysed reaction is L-methionine + ATP + H2O = S-adenosyl-L-methionine + phosphate + diphosphate. It participates in amino-acid biosynthesis; S-adenosyl-L-methionine biosynthesis; S-adenosyl-L-methionine from L-methionine: step 1/1. Catalyzes the formation of S-adenosylmethionine (AdoMet) from methionine and ATP. The overall synthetic reaction is composed of two sequential steps, AdoMet formation and the subsequent tripolyphosphate hydrolysis which occurs prior to release of AdoMet from the enzyme. The polypeptide is S-adenosylmethionine synthase (Mycobacterium bovis (strain ATCC BAA-935 / AF2122/97)).